We begin with the raw amino-acid sequence, 509 residues long: Probable malate:quinone oxidoreductase (509 aa).

Residues 490–509 (LGLNEKEPVSGASEKELVYS) form a disordered region. Residues 493-509 (NEKEPVSGASEKELVYS) show a composition bias toward basic and acidic residues.

The protein belongs to the MQO family. The cofactor is FAD.

The enzyme catalyses (S)-malate + a quinone = a quinol + oxaloacetate. It functions in the pathway carbohydrate metabolism; tricarboxylic acid cycle; oxaloacetate from (S)-malate (quinone route): step 1/1. The polypeptide is Probable malate:quinone oxidoreductase (Geobacillus sp. (strain WCH70)).